A 348-amino-acid chain; its full sequence is 4-hydroxy-3-methylbut-2-enyl diphosphate reductase (348 aa).

C21 is a binding site for [4Fe-4S] cluster. 2 residues coordinate (2E)-4-hydroxy-3-methylbut-2-enyl diphosphate: H50 and H86. The dimethylallyl diphosphate site is built by H50 and H86. 2 residues coordinate isopentenyl diphosphate: H50 and H86. [4Fe-4S] cluster is bound at residue C108. H136 is a (2E)-4-hydroxy-3-methylbut-2-enyl diphosphate binding site. H136 lines the dimethylallyl diphosphate pocket. H136 is an isopentenyl diphosphate binding site. Residue E138 is the Proton donor of the active site. T177 is a (2E)-4-hydroxy-3-methylbut-2-enyl diphosphate binding site. Residue C207 participates in [4Fe-4S] cluster binding. (2E)-4-hydroxy-3-methylbut-2-enyl diphosphate is bound by residues S235, S236, N237, and S280. Dimethylallyl diphosphate is bound by residues S235, S236, N237, and S280. Isopentenyl diphosphate is bound by residues S235, S236, N237, and S280.

This sequence belongs to the IspH family. [4Fe-4S] cluster is required as a cofactor.

It carries out the reaction isopentenyl diphosphate + 2 oxidized [2Fe-2S]-[ferredoxin] + H2O = (2E)-4-hydroxy-3-methylbut-2-enyl diphosphate + 2 reduced [2Fe-2S]-[ferredoxin] + 2 H(+). The enzyme catalyses dimethylallyl diphosphate + 2 oxidized [2Fe-2S]-[ferredoxin] + H2O = (2E)-4-hydroxy-3-methylbut-2-enyl diphosphate + 2 reduced [2Fe-2S]-[ferredoxin] + 2 H(+). It functions in the pathway isoprenoid biosynthesis; dimethylallyl diphosphate biosynthesis; dimethylallyl diphosphate from (2E)-4-hydroxy-3-methylbutenyl diphosphate: step 1/1. It participates in isoprenoid biosynthesis; isopentenyl diphosphate biosynthesis via DXP pathway; isopentenyl diphosphate from 1-deoxy-D-xylulose 5-phosphate: step 6/6. Catalyzes the conversion of 1-hydroxy-2-methyl-2-(E)-butenyl 4-diphosphate (HMBPP) into a mixture of isopentenyl diphosphate (IPP) and dimethylallyl diphosphate (DMAPP). Acts in the terminal step of the DOXP/MEP pathway for isoprenoid precursor biosynthesis. The sequence is that of 4-hydroxy-3-methylbut-2-enyl diphosphate reductase from Agrobacterium fabrum (strain C58 / ATCC 33970) (Agrobacterium tumefaciens (strain C58)).